A 198-amino-acid polypeptide reads, in one-letter code: Endonuclease V (198 aa).

Residues Asp38 and Asp101 each coordinate Mg(2+).

This sequence belongs to the endonuclease V family. It depends on Mg(2+) as a cofactor.

The protein resides in the cytoplasm. The catalysed reaction is Endonucleolytic cleavage at apurinic or apyrimidinic sites to products with a 5'-phosphate.. In terms of biological role, DNA repair enzyme involved in the repair of deaminated bases. Selectively cleaves double-stranded DNA at the second phosphodiester bond 3' to a deoxyinosine leaving behind the intact lesion on the nicked DNA. The protein is Endonuclease V of Saccharolobus islandicus (strain M.16.27) (Sulfolobus islandicus).